Reading from the N-terminus, the 180-residue chain is NADH-quinone oxidoreductase subunit I 1 (180 aa).

2 4Fe-4S ferredoxin-type domains span residues 50 to 80 (LSRD…LQKT) and 90 to 119 (EFFR…LTPD). [4Fe-4S] cluster is bound by residues Cys60, Cys63, Cys66, Cys70, Cys99, Cys102, Cys105, and Cys109.

It belongs to the complex I 23 kDa subunit family. NDH-1 is composed of 14 different subunits. Subunits NuoA, H, J, K, L, M, N constitute the membrane sector of the complex. [4Fe-4S] cluster is required as a cofactor.

The protein localises to the cell inner membrane. The catalysed reaction is a quinone + NADH + 5 H(+)(in) = a quinol + NAD(+) + 4 H(+)(out). In terms of biological role, NDH-1 shuttles electrons from NADH, via FMN and iron-sulfur (Fe-S) centers, to quinones in the respiratory chain. The immediate electron acceptor for the enzyme in this species is believed to be ubiquinone. Couples the redox reaction to proton translocation (for every two electrons transferred, four hydrogen ions are translocated across the cytoplasmic membrane), and thus conserves the redox energy in a proton gradient. The protein is NADH-quinone oxidoreductase subunit I 1 of Nitrosococcus oceani (strain ATCC 19707 / BCRC 17464 / JCM 30415 / NCIMB 11848 / C-107).